We begin with the raw amino-acid sequence, 537 residues long: Beta-arabinofuranosyltransferase RAY1 (537 aa).

A DXD motif motif is present at residues 370–372 (DVD).

This sequence belongs to the glycosyltransferase 77 family.

Beta-arabinofuranosyltransferase that transfers specifically an arabinosyl residue from UDP-arabinofuranose to the monosaccharide galactose or beta-methyl-galactoside in vitro. Catalyzes the addition of a beta-arabinofuranose residue onto a beta-galactosyl residue of an Yariv-precipitable wall polymer in vivo. In Arabidopsis thaliana (Mouse-ear cress), this protein is Beta-arabinofuranosyltransferase RAY1.